We begin with the raw amino-acid sequence, 239 residues long: Pimeloyl-[acyl-carrier protein] methyl ester esterase (239 aa).

Residues tryptophan 20, 77 to 78 (SM), and 138 to 142 (FISLQ) each bind substrate. The Nucleophile role is filled by serine 77. Catalysis depends on residues aspartate 192 and histidine 220. Histidine 220 is a binding site for substrate.

Belongs to the AB hydrolase superfamily. Carboxylesterase BioH family. In terms of assembly, monomer.

It is found in the cytoplasm. The catalysed reaction is 6-carboxyhexanoyl-[ACP] methyl ester + H2O = 6-carboxyhexanoyl-[ACP] + methanol + H(+). Its pathway is cofactor biosynthesis; biotin biosynthesis. In terms of biological role, the physiological role of BioH is to remove the methyl group introduced by BioC when the pimeloyl moiety is complete. It allows to synthesize pimeloyl-ACP via the fatty acid synthetic pathway through the hydrolysis of the ester bonds of pimeloyl-ACP esters. The chain is Pimeloyl-[acyl-carrier protein] methyl ester esterase from Legionella pneumophila (strain Lens).